Consider the following 168-residue polypeptide: Mitochondrial import inner membrane translocase subunit TIM14 (168 aa).

Residues 1–12 (MSSQSNTGNSIE) show a composition bias toward polar residues. Residues 1–29 (MSSQSNTGNSIEAPQLPIPGQTNGSANVT) form a disordered region. Over 1–65 (MSSQSNTGNS…QALNYMGEHP (65 aa)) the chain is Mitochondrial intermembrane. The helical transmembrane segment at 66–83 (VITGFGAFLTLYFTAGAY) threads the bilayer. At 84–168 (KSISKGLNGG…DFLEKRGISK (85 aa)) the chain is on the mitochondrial matrix side. A J domain is found at 112–168 (EALQILNLTENTLTKKKLKEVHRKIMLANHPDKGGSPFLATKINEAKDFLEKRGISK).

The protein belongs to the TIM14 family. Homodimer and heterodimer with PAM16/TIM16. Homodimerization may not be relevant in vivo, while heterodimerization is essential for activity regulation of mtHSP70. Component of the PAM complex, at least composed of mtHsp70, MGE1, TIM44, PAM16, PAM17 and PAM18/TIM14. Interacts directly with mtHsp70. Interacts directly with TIM17 subunit of the TIM23 complex.

The protein resides in the mitochondrion inner membrane. Its function is as follows. Essential component of the PAM complex, a complex required for the translocation of transit peptide-containing proteins from the inner membrane into the mitochondrial matrix in an ATP-dependent manner. In the complex, it is required to stimulate activity of mtHSP70 (SSC1). The protein is Mitochondrial import inner membrane translocase subunit TIM14 (PAM18) of Saccharomyces cerevisiae (strain ATCC 204508 / S288c) (Baker's yeast).